Reading from the N-terminus, the 246-residue chain is Acetoacetate decarboxylase (246 aa).

Residue lysine 116 is the Schiff-base intermediate with acetoacetate of the active site.

This sequence belongs to the ADC family.

The catalysed reaction is acetoacetate + H(+) = acetone + CO2. In terms of biological role, catalyzes the conversion of acetoacetate to acetone and carbon dioxide. The chain is Acetoacetate decarboxylase from Burkholderia vietnamiensis (strain G4 / LMG 22486) (Burkholderia cepacia (strain R1808)).